We begin with the raw amino-acid sequence, 174 residues long: Acetolactate synthase small subunit (174 aa).

Residues 4–78 (TLSVLVQDEA…NILNVQDVTN (75 aa)) form the ACT domain.

This sequence belongs to the acetolactate synthase small subunit family. Dimer of large and small chains.

It is found in the plastid. Its subcellular location is the chloroplast. It catalyses the reaction 2 pyruvate + H(+) = (2S)-2-acetolactate + CO2. It functions in the pathway amino-acid biosynthesis; L-isoleucine biosynthesis; L-isoleucine from 2-oxobutanoate: step 1/4. It participates in amino-acid biosynthesis; L-valine biosynthesis; L-valine from pyruvate: step 1/4. The chain is Acetolactate synthase small subunit (ilvH) from Pyropia yezoensis (Susabi-nori).